Here is a 765-residue protein sequence, read N- to C-terminus: Probable dehydratase PflD (765 aa).

The 635-residue stretch at 3-637 (NRISRLKTAL…VVGATPDGRF (635 aa)) folds into the PFL domain. The 121-residue stretch at 645-765 (GGLSPMLGQD…DIIRRTAHQL (121 aa)) folds into the Glycine radical domain. A Glycine radical modification is found at G741.

It belongs to the glycyl radical enzyme (GRE) family.

Probably shows dehydratase activity. The sequence is that of Probable dehydratase PflD (pflD) from Escherichia coli (strain K12).